Consider the following 106-residue polypeptide: MVNVPKTRRTFCKKCGKHQPHKVTQYKKGKDSLYAQGRRRYDRKQSGYGGQTKPIFRKKAKTTKKIVLRLECVEPNCRSKRMLAIKRCKHFELGGDKKRKGQVIQF.

Residues 26 to 53 (YKKGKDSLYAQGRRRYDRKQSGYGGQTK) form a disordered region. N6-methyllysine is present on lysine 53.

The protein belongs to the eukaryotic ribosomal protein eL42 family. Ubiquitously expressed.

It localises to the cytoplasm. The sequence is that of Ribosomal protein eL42-like (RPL36AL) from Homo sapiens (Human).